A 494-amino-acid polypeptide reads, in one-letter code: 3-octaprenyl-4-hydroxybenzoate carboxy-lyase (494 aa).

N172 lines the Mn(2+) pocket. Prenylated FMN contacts are provided by residues 175–177 (IYR), 189–191 (RWL), and 194–195 (RG). E238 lines the Mn(2+) pocket. D287 acts as the Proton donor in catalysis.

This sequence belongs to the UbiD family. In terms of assembly, homohexamer. Requires prenylated FMN as cofactor. Mn(2+) serves as cofactor.

It localises to the cell membrane. The enzyme catalyses a 4-hydroxy-3-(all-trans-polyprenyl)benzoate + H(+) = a 2-(all-trans-polyprenyl)phenol + CO2. Its pathway is cofactor biosynthesis; ubiquinone biosynthesis. Catalyzes the decarboxylation of 3-octaprenyl-4-hydroxy benzoate to 2-octaprenylphenol, an intermediate step in ubiquinone biosynthesis. The protein is 3-octaprenyl-4-hydroxybenzoate carboxy-lyase of Citrobacter koseri (strain ATCC BAA-895 / CDC 4225-83 / SGSC4696).